An 85-amino-acid polypeptide reads, in one-letter code: Cell division topological specificity factor (85 aa).

Belongs to the MinE family.

Functionally, prevents the cell division inhibition by proteins MinC and MinD at internal division sites while permitting inhibition at polar sites. This ensures cell division at the proper site by restricting the formation of a division septum at the midpoint of the long axis of the cell. In Shewanella oneidensis (strain ATCC 700550 / JCM 31522 / CIP 106686 / LMG 19005 / NCIMB 14063 / MR-1), this protein is Cell division topological specificity factor.